The primary structure comprises 269 residues: Zinc transporter ZupT (269 aa).

8 consecutive transmembrane segments (helical) span residues 5-25 (VLLA…GSLI), 38-58 (SLAL…EIFV), 75-95 (WMTI…DKFI), 125-145 (MGIF…IATF), 158-178 (IAIA…VPIF), 190-210 (LSFL…LLLM), 212-232 (FLTD…MVFI), and 249-269 (LSMY…VLLV). Fe(2+) contacts are provided by asparagine 137 and glutamate 140. The Zn(2+) site is built by glutamate 140 and histidine 165. 3 residues coordinate Fe(2+): asparagine 166, glutamate 169, and glutamate 198. Glutamate 169 contributes to the Zn(2+) binding site.

The protein belongs to the ZIP transporter (TC 2.A.5) family. ZupT subfamily.

It is found in the cell membrane. It carries out the reaction Zn(2+)(in) = Zn(2+)(out). Functionally, mediates zinc uptake. May also transport other divalent cations. The polypeptide is Zinc transporter ZupT (Lysinibacillus sphaericus (strain C3-41)).